Reading from the N-terminus, the 197-residue chain is GTP cyclohydrolase-2 (197 aa).

50–54 (RIHSE) lines the GTP pocket. Zn(2+)-binding residues include Cys-55, Cys-66, and Cys-68. GTP is bound by residues Gln-71, 93–95 (EGR), and Thr-115. Asp-127 serves as the catalytic Proton acceptor. Residue Arg-129 is the Nucleophile of the active site. GTP contacts are provided by Thr-150 and Lys-155.

This sequence belongs to the GTP cyclohydrolase II family. Zn(2+) is required as a cofactor.

The catalysed reaction is GTP + 4 H2O = 2,5-diamino-6-hydroxy-4-(5-phosphoribosylamino)-pyrimidine + formate + 2 phosphate + 3 H(+). The protein operates within cofactor biosynthesis; riboflavin biosynthesis; 5-amino-6-(D-ribitylamino)uracil from GTP: step 1/4. In terms of biological role, catalyzes the conversion of GTP to 2,5-diamino-6-ribosylamino-4(3H)-pyrimidinone 5'-phosphate (DARP), formate and pyrophosphate. The protein is GTP cyclohydrolase-2 of Tolumonas auensis (strain DSM 9187 / NBRC 110442 / TA 4).